Here is an 85-residue protein sequence, read N- to C-terminus: Sec-independent protein translocase protein TatA (85 aa).

A helical transmembrane segment spans residues 1 to 21 (MGGISIWQLLIIALIVVLLFG). Positions 43 to 85 (MSSEEDKKALEDAEAAKPVQTAQTAQPTQQATEKKPESNKEQA) are disordered. Basic and acidic residues predominate over residues 46 to 57 (EEDKKALEDAEA). Over residues 58–73 (AKPVQTAQTAQPTQQA) the composition is skewed to low complexity. Positions 74–85 (TEKKPESNKEQA) are enriched in basic and acidic residues.

The protein belongs to the TatA/E family. The Tat system comprises two distinct complexes: a TatABC complex, containing multiple copies of TatA, TatB and TatC subunits, and a separate TatA complex, containing only TatA subunits. Substrates initially bind to the TatABC complex, which probably triggers association of the separate TatA complex to form the active translocon.

It localises to the cell inner membrane. In terms of biological role, part of the twin-arginine translocation (Tat) system that transports large folded proteins containing a characteristic twin-arginine motif in their signal peptide across membranes. TatA could form the protein-conducting channel of the Tat system. This Shewanella sp. (strain MR-4) protein is Sec-independent protein translocase protein TatA.